Reading from the N-terminus, the 189-residue chain is Apolipoprotein D (189 aa).

The first 21 residues, 1–21, serve as a signal peptide directing secretion; sequence MAPTLLLLLPALAGLISVAQG. Gln22 carries the pyrrolidone carboxylic acid modification. 2 disulfides stabilise this stretch: Cys29/Cys135 and Cys62/Cys186. N-linked (GlcNAc...) asparagine glycans are attached at residues Asn66 and Asn99.

It belongs to the calycin superfamily. Lipocalin family. As to quaternary structure, homodimer. In terms of tissue distribution, most heavily expressed in adrenal gland, lung, brain, testis and spleen.

The protein resides in the secreted. Its function is as follows. APOD occurs in the macromolecular complex with lecithin-transport and binding of bilin. Appears to be able to transport a variety of ligands in a number of different contexts. The sequence is that of Apolipoprotein D (APOD) from Oryctolagus cuniculus (Rabbit).